The primary structure comprises 34 residues: Protamine (34 aa).

Positions 1-34 (PRRRRQASRPVRRRRRTRRSTAERRRRRVVRRRR) are disordered.

Testis.

It localises to the nucleus. The protein resides in the chromosome. Functionally, protamines substitute for histones in the chromatin of sperm during the haploid phase of spermatogenesis. They compact sperm DNA into a highly condensed, stable and inactive complex. The sequence is that of Protamine from Dicentrarchus labrax (European seabass).